Consider the following 328-residue polypeptide: MAEVRVQLLLSRRPESVSFARSVCGLLGAGPGLGTWPIHCSLKRGRLVLSSRPFPGASARLPLQRPPFCPFAALEERPRVPGAELPTDRGVDLGVAVILQSSDKTVLLTRRARTLSVSPNLWVPPGGHVELEEELLDGGLRELWEESGLHLPQGQFSWVPLGLWESAYPPRLSWGLPKYHHIVLYLLVISQESQQQLQARIQPNPNEVSALMWLTPDVAAAVAAAEDGTETPGLLPQDLPPSVLAVELEEDGRARPLVLHMSTLLRMIPTMAEDKERVSTGTKFALKLWLQHLGRTPPPCKSAAYLDPGPAKEEWNMDPLPPNQGSGK.

In terms of domain architecture, Nudix hydrolase spans 90-236 (GVDLGVAVIL…DGTETPGLLP (147 aa)). Positions 127-148 (GHVELEEELLDGGLRELWEESG) match the Nudix box motif. 2 residues coordinate Mg(2+): Glu-142 and Glu-146. Residues 299–328 (PCKSAAYLDPGPAKEEWNMDPLPPNQGSGK) are disordered.

This sequence belongs to the Nudix hydrolase family. It depends on Mg(2+) as a cofactor. Mn(2+) serves as cofactor.

It catalyses the reaction a 5'-end (N(7)-methyl 5'-triphosphoguanosine)-ribonucleoside in mRNA + H2O = N(7)-methyl-GDP + a 5'-end phospho-ribonucleoside in mRNA + 2 H(+). Functionally, acts as a decapping enzyme capable of hydrolyzing monomethylated capped RNAs (in vitro). Hydrolyzes monomethylated capped RNA after alpha and beta phosphates to form N(7)-methyl-GDP. Shows low activity towards unmethylated capped RNA. In Homo sapiens (Human), this protein is m7GpppN-mRNA hydrolase NUDT17 (NUDT17).